The chain runs to 880 residues: Valine--tRNA ligase (880 aa).

A 'HIGH' region motif is present at residues 49–59; that stretch reads PNVTGKLHLGH. The 'KMSKS' region signature appears at 525–529; the sequence is KMSKS. Lys-528 is an ATP binding site. Residues 809–880 are a coiled coil; sequence LEGLINIEEE…VKARLAELKR (72 aa).

Belongs to the class-I aminoacyl-tRNA synthetase family. ValS type 1 subfamily. Monomer.

Its subcellular location is the cytoplasm. The enzyme catalyses tRNA(Val) + L-valine + ATP = L-valyl-tRNA(Val) + AMP + diphosphate. In terms of biological role, catalyzes the attachment of valine to tRNA(Val). As ValRS can inadvertently accommodate and process structurally similar amino acids such as threonine, to avoid such errors, it has a 'posttransfer' editing activity that hydrolyzes mischarged Thr-tRNA(Val) in a tRNA-dependent manner. This chain is Valine--tRNA ligase, found in Geobacillus kaustophilus (strain HTA426).